Here is a 367-residue protein sequence, read N- to C-terminus: Cobalt-precorrin-5B C(1)-methyltransferase (367 aa).

Belongs to the CbiD family.

It catalyses the reaction Co-precorrin-5B + S-adenosyl-L-methionine = Co-precorrin-6A + S-adenosyl-L-homocysteine. It functions in the pathway cofactor biosynthesis; adenosylcobalamin biosynthesis; cob(II)yrinate a,c-diamide from sirohydrochlorin (anaerobic route): step 6/10. Functionally, catalyzes the methylation of C-1 in cobalt-precorrin-5B to form cobalt-precorrin-6A. This Leptospira interrogans serogroup Icterohaemorrhagiae serovar copenhageni (strain Fiocruz L1-130) protein is Cobalt-precorrin-5B C(1)-methyltransferase.